A 577-amino-acid chain; its full sequence is Outer spore wall assembly protein SHE10 (577 aa).

The first 23 residues, 1-23 (MGKLIKLITTLTVLVSLLQYCCE), serve as a signal peptide directing secretion. 2 coiled-coil regions span residues 379 to 416 (NETR…ENVE) and 513 to 561 (ILRS…EEDV). A compositionally biased stretch (basic and acidic residues) spans 525 to 545 (RERKERERKEREKAAAEEFQR). The segment at 525-577 (RERKERERKEREKAAAEEFQRQQELLLQQEEEDEEDVSYTSTSTITTTTTMTL) is disordered. Residues 562-577 (SYTSTSTITTTTTMTL) are compositionally biased toward low complexity.

It belongs to the SHE10 family. In terms of assembly, component of the mitochondria-localized RNase mitochondrial RNA-processing (RNase MRP) composed of one single RNA encoded by the NME1 gene and at least 31 proteins. Absent in the nucleus-localized RNase MRP (NuMRP).

It is found in the mitochondrion. In terms of biological role, involved in spore wall assembly. May be a component of the mitochondrial RNase MRP (MtMRP), a ribonucleoprotein endoribonuclease involved in the cleaving RNA transcripts to generate primers for DNA replication in mitochondria. This is Outer spore wall assembly protein SHE10 from Saccharomyces cerevisiae (strain RM11-1a) (Baker's yeast).